The chain runs to 249 residues: tRNA (guanine-N(1)-)-methyltransferase (249 aa).

S-adenosyl-L-methionine contacts are provided by residues Gly113 and 133–138 (IGDFVV).

This sequence belongs to the RNA methyltransferase TrmD family. In terms of assembly, homodimer.

Its subcellular location is the cytoplasm. It catalyses the reaction guanosine(37) in tRNA + S-adenosyl-L-methionine = N(1)-methylguanosine(37) in tRNA + S-adenosyl-L-homocysteine + H(+). Its function is as follows. Specifically methylates guanosine-37 in various tRNAs. This Neisseria meningitidis serogroup C (strain 053442) protein is tRNA (guanine-N(1)-)-methyltransferase.